Reading from the N-terminus, the 367-residue chain is Anhydro-N-acetylmuramic acid kinase (367 aa).

Residue 13 to 20 (GTSMDGAD) coordinates ATP.

This sequence belongs to the anhydro-N-acetylmuramic acid kinase family.

It carries out the reaction 1,6-anhydro-N-acetyl-beta-muramate + ATP + H2O = N-acetyl-D-muramate 6-phosphate + ADP + H(+). Its pathway is amino-sugar metabolism; 1,6-anhydro-N-acetylmuramate degradation. It participates in cell wall biogenesis; peptidoglycan recycling. In terms of biological role, catalyzes the specific phosphorylation of 1,6-anhydro-N-acetylmuramic acid (anhMurNAc) with the simultaneous cleavage of the 1,6-anhydro ring, generating MurNAc-6-P. Is required for the utilization of anhMurNAc either imported from the medium or derived from its own cell wall murein, and thus plays a role in cell wall recycling. This chain is Anhydro-N-acetylmuramic acid kinase, found in Neisseria meningitidis serogroup B (strain ATCC BAA-335 / MC58).